The sequence spans 116 residues: M-zodatoxin-Lt6a/b (116 aa).

Positions 1–22 (MKYFVVALTLAVAFVCIEECKT) are cleaved as a signal peptide. 2 propeptides span residues 23-44 (VEIG…EEAR) and 80-83 (EEAR). Short sequence motifs (processing quadruplet motif) lie at residues 41–44 (EEAR) and 80–83 (EEAR). Q84 carries the post-translational modification Pyrrolidone carboxylic acid.

Belongs to the cationic peptide 03 (latarcin) family. 06 subfamily. In terms of processing, cleavage of the propeptide depends on the processing quadruplet motif (XXXR, with at least one of X being E). Expressed by the venom gland.

Its subcellular location is the secreted. Functionally, does not have antimicrobial activity against neither Gram-positive bacteria (A.globiformis VKM Ac-1112 (MIC&gt;70 uM), and B.subtilis VKM B-501 (MIC&gt;70 uM)), nor Gram-negative bacteria (E.coli DH5-alpha (MIC&gt;70 uM), E.coli MH1 (MIC&gt;70 uM), and P.aeruginosa PAO1 (MIC&gt;70 uM)), nor yeasts (P.pastoris GS115 (MIC&gt;70 uM), and S.cerevisiae Y190 (MIC&gt;70 uM)). Does not have hemolytic activity against rabbit erythrocytes. However, it causes some conductance changes in planar bilayer membranes, without membrane rupture, suggesting a cytolytic function on other biological targets. It causes paralysis, but is not lethal when injected into insect (M.domestica) larvae. This is M-zodatoxin-Lt6a/b from Lachesana tarabaevi (Spider).